A 382-amino-acid polypeptide reads, in one-letter code: Chorismate synthase (382 aa).

Residues Arg39 and Arg45 each coordinate NADP(+). FMN contacts are provided by residues 127 to 129, 245 to 246, Gly290, 305 to 309, and Arg331; these read RAS, QA, and KPIPT.

This sequence belongs to the chorismate synthase family. In terms of assembly, homotetramer. It depends on FMNH2 as a cofactor.

The enzyme catalyses 5-O-(1-carboxyvinyl)-3-phosphoshikimate = chorismate + phosphate. Its pathway is metabolic intermediate biosynthesis; chorismate biosynthesis; chorismate from D-erythrose 4-phosphate and phosphoenolpyruvate: step 7/7. In terms of biological role, catalyzes the anti-1,4-elimination of the C-3 phosphate and the C-6 proR hydrogen from 5-enolpyruvylshikimate-3-phosphate (EPSP) to yield chorismate, which is the branch point compound that serves as the starting substrate for the three terminal pathways of aromatic amino acid biosynthesis. This reaction introduces a second double bond into the aromatic ring system. This chain is Chorismate synthase, found in Desulfitobacterium hafniense (strain DSM 10664 / DCB-2).